The following is a 300-amino-acid chain: Ribonuclease HIII (300 aa).

The RNase H type-2 domain maps to 83–300; sequence IPIIGSDEVG…THKAQALLTK (218 aa). Positions 89, 90, and 194 each coordinate a divalent metal cation.

This sequence belongs to the RNase HII family. RnhC subfamily. It depends on Mn(2+) as a cofactor. Requires Mg(2+) as cofactor.

Its subcellular location is the cytoplasm. It carries out the reaction Endonucleolytic cleavage to 5'-phosphomonoester.. Endonuclease that specifically degrades the RNA of RNA-DNA hybrids. In Streptococcus pyogenes serotype M5 (strain Manfredo), this protein is Ribonuclease HIII.